Reading from the N-terminus, the 173-residue chain is MADSSAAEPTTGASSPPVASDENSTQIQPIRMPTIEEIRAQEVWNNCAVRAVTSGVMGGGLGLMMGLFLGALDNPITHDTMTARQQFVFTAKQMGQRSWNSCKTFAVMGLVFSAAECIVEKARAKHDTVNTAIAGCVTGGSMSARGGPKAACIGCAGFATFSVLIEKFFDRHT.

The N-terminal 18 residues, 1–18, are a transit peptide targeting the mitochondrion; the sequence is MADSSAAEPTTGASSPPV. Positions 1-26 are disordered; that stretch reads MADSSAAEPTTGASSPPVASDENSTQ. 4 consecutive transmembrane segments (helical) span residues 52–72, 101–119, 128–144, and 151–168; these read VTSG…LGAL, SCKT…ECIV, TVNT…SMSA, and ACIG…IEKF.

It belongs to the Tim17/Tim22/Tim23 family. As to expression, expressed in young cotyledons, roots, flowers and leaves.

Its subcellular location is the mitochondrion inner membrane. Functionally, essential core component of the TIM22 complex, a complex that mediates the import and insertion of multi-pass transmembrane proteins into the mitochondrial inner membrane. The sequence is that of Mitochondrial import inner membrane translocase subunit TIM22-1 (TIM22-1) from Arabidopsis thaliana (Mouse-ear cress).